A 209-amino-acid polypeptide reads, in one-letter code: Pyroglutamyl-peptidase 1 (209 aa).

Residues glutamate 85, cysteine 149, and histidine 168 contribute to the active site.

It belongs to the peptidase C15 family. As to quaternary structure, monomer.

Its subcellular location is the cytoplasm. It catalyses the reaction Release of an N-terminal pyroglutamyl group from a polypeptide, the second amino acid generally not being Pro.. With respect to regulation, inhibited by transition metal ions including Ni(2+), Zn(2+), and Cu(2+) and by sulfhydryl-blocking agents. In terms of biological role, removes 5-oxoproline from various penultimate amino acid residues except L-proline. This Homo sapiens (Human) protein is Pyroglutamyl-peptidase 1 (PGPEP1).